A 291-amino-acid polypeptide reads, in one-letter code: MFKGSYVALITPFKNGAVDEAAFVKLVEWQIEQGTHGLVPCGTTGESPTLSHDEHKRVVELCVKTAKGRVPVIAGAGSNNTVEAIELTRFAKKVGADAVLSVTGYYNKPSQEGIFAHFKAVNDAVDIPIILYNIPGRTIVDITLETMTRLFELKNVVGVKDATANLARVSLQRQEMGAEFCQLSGEDATALGFNAHGGVGCISVTANVAPALCSAFQEATLDGDYRKALEIQDRLMPLHNALFVDPNPAPVKYAANLLGLCANELRLPLVPASAAAEQKVLGAMRSAGLLN.

Residue T44 coordinates pyruvate. Y132 functions as the Proton donor/acceptor in the catalytic mechanism. Catalysis depends on K160, which acts as the Schiff-base intermediate with substrate. I202 contacts pyruvate.

The protein belongs to the DapA family. As to quaternary structure, homotetramer; dimer of dimers.

The protein localises to the cytoplasm. It carries out the reaction L-aspartate 4-semialdehyde + pyruvate = (2S,4S)-4-hydroxy-2,3,4,5-tetrahydrodipicolinate + H2O + H(+). It functions in the pathway amino-acid biosynthesis; L-lysine biosynthesis via DAP pathway; (S)-tetrahydrodipicolinate from L-aspartate: step 3/4. Functionally, catalyzes the condensation of (S)-aspartate-beta-semialdehyde [(S)-ASA] and pyruvate to 4-hydroxy-tetrahydrodipicolinate (HTPA). The chain is 4-hydroxy-tetrahydrodipicolinate synthase from Parvibaculum lavamentivorans (strain DS-1 / DSM 13023 / NCIMB 13966).